The following is a 936-amino-acid chain: F-box protein dre-1 (936 aa).

Residues 1-67 (MSSSSSPFFH…GSSEADNPTL (67 aa)) form a disordered region. A compositionally biased stretch (low complexity) spans 22 to 36 (QQSPSYSQNSNSPSQ). Positions 48–63 (GSTSMRYSPSGSSEAD) are enriched in polar residues. The F-box domain maps to 159-205 (QDHINRLPEELLLKVFSFLPDKSLLACSSVSYRFNQISNSHEVWKEL). 18 PbH1 repeats span residues 405-427 (SAAP…YITD), 428-450 (NATG…WVKN), 451-473 (HANP…FTFE), 474-496 (HGQG…EVKN), 497-519 (SANP…YVHE), 520-542 (RGRG…WITS), 543-565 (HSDP…YIFG), 566-588 (EGRG…QIRS), 589-611 (QSDP…YVHE), 612-634 (KGRG…WVTT), 635-657 (GSSP…YFYD), 658-680 (QGHG…QIRT), 681-703 (GSNP…LVYN), 704-726 (GGKG…WIKT), 727-749 (DSEP…CIFN), 750-772 (RGKG…LIST), 773-795 (ESNP…EITN), and 796-818 (GATA…CVAT). The segment at 843–914 (GLCLFKVSSN…LERHCHLQNV (72 aa)) adopts a UBR-type zinc-finger fold.

In terms of assembly, component of a SCF ubiquitin ligase complex. Interacts (via F-box) with skr-1. Interacts with blmp-1; the interaction targets blmp-1 for proteasomal degradation. Interacts with ced-9; the interaction inhibits ced-9 activity, either directly or indirectly. In mid-embryogenesis, expression is most prominent in epidermal and intestinal cells. By the 1.5-fold stage of embryogenesis, expression is additionally detected in neurons and other cells. During larval and adult stages, highest expression is seen in epidermal seam cells and hypodermis. In larvae, strongly expressed in the P epidermal blast cells and descendents that give rise to the vulva and weakly expressed in the somatic gonad, including the gonadoblasts, the anchor cell and the distal tip cells. Some weak expression also seen in adult spermatheca and uterus. In the musculature, expressed in the pharynx, anal depressor, sex muscles, and body wall muscles. Detected in neurons of the head, tail, ventral cord and periphery. Also expressed in the embryonic tail spike cell.

It is found in the nucleus. The protein resides in the cytoplasm. The protein operates within protein modification; protein ubiquitination. Its function is as follows. Substrate recognition component of a SCF (SKP1-CUL1-F-box protein) E3 ubiquitin-protein ligase complex which mediates the ubiquitination and subsequent proteasomal degradation of target proteins including blmp-1. Promotes ubiquitination of snail family proteins ces-1, scrt-1 and snai-1. Heterochronic protein which is required for the timing of gonad development and epidermal seam cell differentiation. Regulates tail-spike cell death through inhibition of the apoptosis regulator ced-9. The chain is F-box protein dre-1 from Caenorhabditis elegans.